The chain runs to 100 residues: Small ribosomal subunit protein uS14 (100 aa).

It belongs to the universal ribosomal protein uS14 family. As to quaternary structure, part of the 30S ribosomal subunit. Contacts proteins S3 and S10.

Binds 16S rRNA, required for the assembly of 30S particles and may also be responsible for determining the conformation of the 16S rRNA at the A site. This Microcystis aeruginosa (strain NIES-843 / IAM M-2473) protein is Small ribosomal subunit protein uS14.